Consider the following 72-residue polypeptide: UPF0729 protein C18orf32 homolog (72 aa).

Positions 1-33 (MVCIPCIVIPVLLWIFKKFLEPYIYPVVSRIWP) are necessary for its localzation to the endoplasmic reticulum and lipid droplets. Residues 45–72 (TGKVDCKGADTNGFSTKGPTEVSDKKKD) are disordered.

This sequence belongs to the UPF0729 family. Interacts with DERL1 and AMFR. Undergoes ER-associated degradation (ERAD).

It localises to the endoplasmic reticulum. It is found in the lipid droplet. Functionally, may activate the NF-kappa-B signaling pathway. The polypeptide is UPF0729 protein C18orf32 homolog (Rattus norvegicus (Rat)).